A 560-amino-acid chain; its full sequence is Cytosolic purine 5'-nucleotidase (560 aa).

Residue Asp52 is the Nucleophile of the active site. IMP-binding residues include Asp52 and Asp54. The Mg(2+) site is built by Asp52 and Asp54. Asp54 acts as the Proton donor in catalysis. Residues Arg144 and Asn154 each coordinate ATP. Residues Arg202, Asp206, Lys215, Thr249, Asn250, Ser251, and Lys292 each coordinate IMP. Asp351 lines the Mg(2+) pocket. Ser418 bears the Phosphoserine mark. Positions 453 and 456 each coordinate ATP. Phosphoserine is present on residues Ser502, Ser511, and Ser527. The segment at 541-560 (PQEITHCHDEDDDEEEEEEE) is disordered. The segment at 548 to 560 (HDEDDDEEEEEEE) is required for tetramer assembly. Positions 550–560 (EDDDEEEEEEE) are enriched in acidic residues.

Belongs to the 5'(3')-deoxyribonucleotidase family. In terms of assembly, homotetramer. The cofactor is Mg(2+).

It is found in the cytoplasm. Its subcellular location is the cytosol. The enzyme catalyses a ribonucleoside 5'-phosphate + H2O = a ribonucleoside + phosphate. It carries out the reaction a 2'-deoxyribonucleoside + a ribonucleoside 5'-phosphate = a ribonucleoside + a 2'-deoxyribonucleoside 5'-phosphate. The catalysed reaction is IMP + H2O = inosine + phosphate. It catalyses the reaction GMP + H2O = guanosine + phosphate. The enzyme catalyses dIMP + H2O = 2'-deoxyinosine + phosphate. It carries out the reaction dGMP + H2O = 2'-deoxyguanosine + phosphate. The catalysed reaction is XMP + H2O = xanthosine + phosphate. It catalyses the reaction inosine + GMP = guanosine + IMP. The enzyme catalyses dGMP + inosine = 2'-deoxyguanosine + IMP. It carries out the reaction dIMP + inosine = 2'-deoxyinosine + IMP. The catalysed reaction is inosine + UMP = uridine + IMP. It catalyses the reaction inosine + CMP = cytidine + IMP. The enzyme catalyses inosine + AMP = IMP + adenosine. Allosterically activated by various compounds including ATP, 2,3-BPG/2,3-Bisphosphoglyceric acid and Ap4A/P1,P4-bis(5'-adenosyl) tetraphosphate. Binding of an allosteric activator is a prerequisiste to magnesium and substrate binding. Inhibited by inorganic phosphate. In terms of biological role, broad specificity cytosolic 5'-nucleotidase that catalyzes the dephosphorylation of 6-hydroxypurine nucleoside 5'-monophosphates. In addition, possesses a phosphotransferase activity by which it can transfer a phosphate from a donor nucleoside monophosphate to an acceptor nucleoside, preferably inosine, deoxyinosine and guanosine. Has the highest activities for IMP and GMP followed by dIMP, dGMP and XMP. Could also catalyze the transfer of phosphates from pyrimidine monophosphates but with lower efficiency. Through these activities regulates the purine nucleoside/nucleotide pools within the cell. In Bos taurus (Bovine), this protein is Cytosolic purine 5'-nucleotidase.